A 455-amino-acid chain; its full sequence is MMSFSVLQVKRLQPELITPAKSTPQETKFLSDIDDQESLRVQIPIIMCYKDNPSLNKNRNPVKAIREALSRALVYYYPLAGRLREGPNRKLVVDCNGEGILFVEASADVTLEQLGDKILPPCPLLEEFLYNFPGSDGIIDCPLLLIQVTCLTCGGFILALRLNHTMCDAFGLLQFLTAIAEMARGAHAPSILPVWERELLFARNPPRITCAHHEYEDVIDHSDGSYTSSNQSNMVQRSFYFGAKEMRVLRKQIPRHLISTCSTFDLITACLWKCRTLALKINPKQAVRVSCTVNARGKHHNVRLPLGYYGNAFAFPAAVSKAEPLCKNPMGYALELVKKAKATMNEEYLRSVADLLVLRGRPQYSSTGSYLIVSDNTRAGFGDVNFGWGQPVFAGPAKALDLVSFYVQHKNNTEDGILVPMCLPSSAMERFQQEFEMITQEPKEDICNNLRSTSQ.

Residues His-164 and Asn-385 each act as proton acceptor in the active site.

The protein belongs to the plant acyltransferase family.

Functionally, involved in the biosynthesis of volatile esters which confer ripe apple fruit flavor. Alcohol acyl transferase that can use a wide range of alcohols as substrate to produce esters. The protein is Alcohol acyl transferase 1 allele RGb of Malus domestica (Apple).